The chain runs to 1366 residues: Serine/threonine-protein kinase RUNKEL (1366 aa).

Residues 10-18 (IGHGKCSTV) and lysine 33 contribute to the ATP site. Aspartate 121 acts as the Proton acceptor in catalysis. Disordered regions lie at residues 276–356 (TKPC…VNIL), 367–386 (QKEN…NENC), 398–502 (LDFD…DSSK), and 524–549 (PSRK…FSKK). Basic and acidic residues predominate over residues 283–302 (RNGDRPNKTPPKYREKDRKG). Polar residues predominate over residues 304–313 (SKQNENSIQG). Basic and acidic residues predominate over residues 367-376 (QKENEKENYR). The segment covering 398–414 (LDFDENNDDEGPDESEG) has biased composition (acidic residues). Over residues 422–433 (QEERVMSHNENH) the composition is skewed to basic and acidic residues. Residues 438–454 (VVSSNVPDENSSANETP) show a composition bias toward polar residues. HEAT repeat units lie at residues 595–633 (LTNG…HSTS), 638–675 (LANS…YIST), 699–737 (QVSN…QGAY), 835–872 (TEEK…NSRR), 878–907 (FCNA…AFVN), 908–945 (VIAS…RAPV), 946–986 (KTNA…LVEA), 992–1018 (DDFR…NGEI), 1019–1057 (IIRE…LLTE), 1072–1111 (ISNS…IKIS), 1279–1316 (TNLP…YACK), and 1329–1366 (GHDV…RLPR).

It belongs to the protein kinase superfamily. Ser/Thr protein kinase family. As to quaternary structure, binds to microtubules (MT). Expressed in proliferating tissues of seedlings, lateral roots, young rosette leaves, siliques, flowers, embryos and stems (including apical meristem).

The protein localises to the cytoplasm. Its subcellular location is the cytoskeleton. It is found in the phragmoplast. The protein resides in the spindle. It carries out the reaction L-seryl-[protein] + ATP = O-phospho-L-seryl-[protein] + ADP + H(+). It catalyses the reaction L-threonyl-[protein] + ATP = O-phospho-L-threonyl-[protein] + ADP + H(+). Functionally, essential protein that regulates phragmoplast microtubule organization during cell plate expansion in cytokinesis during cell division, both somatic and syncytial. Required for endosperm cellularisation. In pollen development, involved in cellularisation during microsporogenesis by regulating radial microtubules (MT) organization in microspore mother cells. Seems to not have kinase activity. This Arabidopsis thaliana (Mouse-ear cress) protein is Serine/threonine-protein kinase RUNKEL.